The chain runs to 88 residues: MANIKSQKKRILTNEKARLRNNAVKSELKTAVRAVNQAVEAGNKETAGEALVHASRKLDKAVSKGVIHSNQAANRKSAISKKVSALKG.

Belongs to the bacterial ribosomal protein bS20 family.

Its function is as follows. Binds directly to 16S ribosomal RNA. The protein is Small ribosomal subunit protein bS20 of Renibacterium salmoninarum (strain ATCC 33209 / DSM 20767 / JCM 11484 / NBRC 15589 / NCIMB 2235).